A 450-amino-acid chain; its full sequence is Mitochondrial distribution and morphology protein 10 (450 aa).

The protein belongs to the MDM10 family. In terms of assembly, component of the ER-mitochondria encounter structure (ERMES) or MDM complex, composed of MMM1, MDM10, MDM12 and MDM34. Associates with the mitochondrial outer membrane sorting assembly machinery SAM(core) complex.

The protein resides in the mitochondrion outer membrane. Its function is as follows. Component of the ERMES/MDM complex, which serves as a molecular tether to connect the endoplasmic reticulum and mitochondria. Components of this complex are involved in the control of mitochondrial shape and protein biogenesis and may function in phospholipid exchange. MDM10 is involved in the late assembly steps of the general translocase of the mitochondrial outer membrane (TOM complex). Functions in the TOM40-specific route of the assembly of outer membrane beta-barrel proteins, including the association of TOM40 with the receptor TOM22 and small TOM proteins. Can associate with the SAM(core) complex as well as the MDM12-MMM1 complex, both involved in late steps of the major beta-barrel assembly pathway, that is responsible for biogenesis of all outer membrane beta-barrel proteins. May act as a switch that shuttles between both complexes and channels precursor proteins into the TOM40-specific pathway. Plays a role in mitochondrial morphology and in the inheritance of mitochondria. In Paracoccidioides lutzii (strain ATCC MYA-826 / Pb01) (Paracoccidioides brasiliensis), this protein is Mitochondrial distribution and morphology protein 10.